Reading from the N-terminus, the 753-residue chain is Dolichyl-phosphate-mannose--protein mannosyltransferase 3 (753 aa).

At 1–50 (MPYRVATGYSEKSTDDDLIWRTPIVKEELEDADNFLKDDAELYDKVKNES) the chain is on the cytoplasmic side. A helical membrane pass occupies residues 51–71 (AVSHLDTIVMPIIFTVLGMFT). Residues 72–148 (RMYKIGRNNH…IDYVKMRLFQ (77 aa)) are Lumenal-facing. N-linked (GlcNAc...) asparagine glycosylation is present at N124. A helical transmembrane segment spans residues 149 to 169 (AMFSSLCVPLAYFTGRAIGFS). Residues 170–174 (RLSVW) are Cytoplasmic-facing. Residues 175–195 (LFTILVIFENSYATLGKFILL) form a helical membrane-spanning segment. The Lumenal portion of the chain corresponds to 196–235 (DSMLLFFTVSSYFCLAKFHTMRKSPFSARWWLWLCLTGLN). A helical membrane pass occupies residues 236–256 (LGCAISVKMVGLFIISVVGIY). At 257–282 (TISELWNLLSDRSVSWKVYVNHWLAR) the chain is on the cytoplasmic side. A helical transmembrane segment spans residues 283–303 (IFGLIIIPVCVFLLCFKIHFD). The Lumenal segment spans residues 304-602 (LLSNSGPGDS…IKYFLLGSPA (299 aa)). Residue N324 is glycosylated (N-linked (GlcNAc...) asparagine). The MIR 1 domain maps to 332-387 (PRDVALGSSIISIKNQALGGALLHSHVQPFPEGSEQQQVTVYGYSDANNEWFFQRI). A glycan (N-linked (GlcNAc...) asparagine) is linked at N398. MIR domains follow at residues 401 to 457 (IEFV…IEIV) and 465 to 523 (PTLL…IETH). The helical transmembrane segment at 603 to 623 (SVWPSSIAVCALIIHVIFLTL) threads the bilayer. Residues 624–639 (KWQRQCVILSDPVERD) are Cytoplasmic-facing. A helical membrane pass occupies residues 640–660 (VFVMAAFYPLLAWLLHYMPFV). Residues 661 to 665 (VMSRV) lie on the Lumenal side of the membrane. Residues 666 to 686 (VYAHHYLPTLYFALMILSYYF) traverse the membrane as a helical segment. Over 687 to 703 (DMITKRWATRNTGKFLR) the chain is Cytoplasmic. The chain crosses the membrane as a helical span at residues 704 to 724 (LGAYIVYGSIVIAGFFYFSPF). Residues 725–753 (SFGMDGPVDDYAYLAWLPTWQIVEDIRNT) lie on the Lumenal side of the membrane.

This sequence belongs to the glycosyltransferase 39 family. PMT3 and PMT5 form a functional heterodimer. Also forms a minor complex with PMT1.

Its subcellular location is the endoplasmic reticulum membrane. It carries out the reaction a di-trans,poly-cis-dolichyl beta-D-mannosyl phosphate + L-seryl-[protein] = 3-O-(alpha-D-mannosyl)-L-seryl-[protein] + a di-trans,poly-cis-dolichyl phosphate + H(+). The enzyme catalyses a di-trans,poly-cis-dolichyl beta-D-mannosyl phosphate + L-threonyl-[protein] = 3-O-(alpha-D-mannosyl)-L-threonyl-[protein] + a di-trans,poly-cis-dolichyl phosphate + H(+). It functions in the pathway protein modification; protein glycosylation. In terms of biological role, protein O-mannosyltransferase involved in O-glycosylation which is essential for cell wall rigidity. Forms a heterodimeric complex with PMT5 and more rarely with PMT1 to transfer mannose from Dol-P-mannose to Ser or Thr residues on proteins. Seems to have redundant activity to PMT2. This chain is Dolichyl-phosphate-mannose--protein mannosyltransferase 3, found in Saccharomyces cerevisiae (strain ATCC 204508 / S288c) (Baker's yeast).